The sequence spans 290 residues: Transposon Ty3-I Gag polyprotein (290 aa).

N-acetylserine is present on Ser2. Residues 265–282 form a CCHC-type zinc finger; it reads RLCFYCKKEGHRLNECRA.

It localises to the cytoplasm. In terms of biological role, capsid protein (CA) is the structural component of the virus-like particle (VLP), forming the shell that encapsulates the retrotransposons dimeric RNA genome. Its function is as follows. Nucleocapsid protein p9 (NC) forms the nucleocore that coats the retro-elements dimeric RNA. Binds these RNAs through its zinc fingers. Promotes primer tRNA(i)-Met annealing to the multipartite primer-binding site (PBS), dimerization of Ty3 RNA and initiation of reverse transcription. In Saccharomyces cerevisiae (strain ATCC 204508 / S288c) (Baker's yeast), this protein is Transposon Ty3-I Gag polyprotein (TY3A-I).